A 99-amino-acid polypeptide reads, in one-letter code: uncharacterized protein (99 aa).

Residues 74-90 (FLSLPLGHSYLFLFCFW) traverse the membrane as a helical segment.

It localises to the membrane. This is an uncharacterized protein from Saccharomyces cerevisiae (strain ATCC 204508 / S288c) (Baker's yeast).